The sequence spans 513 residues: ATP synthase subunit alpha (513 aa).

ATP is bound at residue 169–176 (GDRQTGKS).

This sequence belongs to the ATPase alpha/beta chains family. In terms of assembly, F-type ATPases have 2 components, CF(1) - the catalytic core - and CF(0) - the membrane proton channel. CF(1) has five subunits: alpha(3), beta(3), gamma(1), delta(1), epsilon(1). CF(0) has three main subunits: a(1), b(2) and c(9-12). The alpha and beta chains form an alternating ring which encloses part of the gamma chain. CF(1) is attached to CF(0) by a central stalk formed by the gamma and epsilon chains, while a peripheral stalk is formed by the delta and b chains.

Its subcellular location is the cell inner membrane. The enzyme catalyses ATP + H2O + 4 H(+)(in) = ADP + phosphate + 5 H(+)(out). Its function is as follows. Produces ATP from ADP in the presence of a proton gradient across the membrane. The alpha chain is a regulatory subunit. This Blochmanniella floridana protein is ATP synthase subunit alpha.